The primary structure comprises 91 residues: Small ribosomal subunit protein bS18 (91 aa).

It belongs to the bacterial ribosomal protein bS18 family. In terms of assembly, part of the 30S ribosomal subunit. Forms a tight heterodimer with protein bS6.

Its function is as follows. Binds as a heterodimer with protein bS6 to the central domain of the 16S rRNA, where it helps stabilize the platform of the 30S subunit. The polypeptide is Small ribosomal subunit protein bS18 (Wolbachia sp. subsp. Brugia malayi (strain TRS)).